Here is a 365-residue protein sequence, read N- to C-terminus: Glutamate 5-kinase 1 (365 aa).

ATP is bound at residue lysine 9. Serine 49, aspartate 136, and asparagine 148 together coordinate substrate. ATP is bound by residues 168 to 169 (TD) and 210 to 216 (TGGMKSK). Positions 276–353 (SGEIIIDAGA…DELDFEKTFE (78 aa)) constitute a PUA domain.

This sequence belongs to the glutamate 5-kinase family.

The protein localises to the cytoplasm. It catalyses the reaction L-glutamate + ATP = L-glutamyl 5-phosphate + ADP. The protein operates within amino-acid biosynthesis; L-proline biosynthesis; L-glutamate 5-semialdehyde from L-glutamate: step 1/2. Functionally, catalyzes the transfer of a phosphate group to glutamate to form L-glutamate 5-phosphate. The protein is Glutamate 5-kinase 1 of Bacillus subtilis (strain 168).